Consider the following 433-residue polypeptide: Histidinol dehydrogenase homolog (433 aa).

Zn(2+)-binding residues include glutamine 249 and histidine 252. Active-site proton acceptor residues include glutamate 319 and histidine 320. Residues aspartate 353 and histidine 412 each coordinate Zn(2+).

The protein belongs to the histidinol dehydrogenase family. Zn(2+) serves as cofactor.

In Ruegeria pomeroyi (strain ATCC 700808 / DSM 15171 / DSS-3) (Silicibacter pomeroyi), this protein is Histidinol dehydrogenase homolog.